Here is a 442-residue protein sequence, read N- to C-terminus: U11/U12 small nuclear ribonucleoprotein 65 kDa protein (442 aa).

One can recognise an RRM 1 domain in the interval 28-102; sequence VTLLVRHLPD…KVLQVQRANK (75 aa). 3 disordered regions span residues 101 to 138, 200 to 242, and 290 to 317; these read NKPNDNKKSRQIEESVTKGNAFSTVSTNNDSKSGQILS, LALP…GRKR, and SKVTQDEYKEESENEDPADEPKEKDSNL. Positions 102 to 116 are enriched in basic and acidic residues; that stretch reads KPNDNKKSRQIEESV. Over residues 117–136 the composition is skewed to polar residues; sequence TKGNAFSTVSTNNDSKSGQI. A compositionally biased stretch (pro residues) spans 200 to 209; sequence LALPTPPLPK. Acidic residues predominate over residues 297–307; sequence YKEESENEDPA. One can recognise an RRM 2 domain in the interval 352–434; that stretch reads VVLYIKNLAK…KPMIIQFGRT (83 aa).

As to quaternary structure, component of the U11/U12 snRNPs that are part of the U12-type spliceosome. Forms a complex with U12 snRNA. Ubiquitous.

Its subcellular location is the nucleus. Its function is as follows. Component of minor spliceosome required for U12-type intron splicing and alternative splicing of many introns. Binds specifically to U12 snRNA, which is necessary for branch-point site recognition. Required for normal plant development. The sequence is that of U11/U12 small nuclear ribonucleoprotein 65 kDa protein (SNRNP65) from Arabidopsis thaliana (Mouse-ear cress).